Reading from the N-terminus, the 638-residue chain is Autolysin (638 aa).

The signal sequence occupies residues 1 to 28 (MSLATRRFGAAAALLVAACVLCTAPAWA). Residues 29–183 (QNETTGTGMV…LKSILKGSQK (155 aa)) constitute a propeptide, activation peptide. Asn-30 carries an N-linked (GlcNAc...) asparagine glycan. The Cysteine switch signature appears at 95–102 (PRCNVPRA). Cys-97 lines the Zn(2+) pocket. An N-linked (GlcNAc...) asparagine glycan is attached at Asn-126. A disordered region spans residues 269–292 (VTPPPRPPRPPRPPPRAGSTISSL). Positions 270 to 284 (TPPPRPPRPPRPPPR) are enriched in pro residues. N-linked (GlcNAc...) asparagine glycosylation is present at Asn-296. His-396 contacts Zn(2+). Residue Glu-397 is part of the active site. Zn(2+) contacts are provided by His-400 and His-406. 4 N-linked (GlcNAc...) asparagine glycosylation sites follow: Asn-458, Asn-465, Asn-470, and Asn-523.

The protein belongs to the peptidase M11 family. The cofactor is Zn(2+). Present in 2 forms: an inactive V-form in vegetative cells and an active and soluble G-form. The V-form enzyme may be converted to the G-form enzyme during gametic differentiation under nitrogen-starved conditions.

The protein localises to the periplasm. The protein resides in the secreted. It localises to the cell wall. The enzyme catalyses Cleavage of the proline- and hydroxyproline-rich proteins of the Chlamydomonas cell wall. Also cleaves azocasein, gelatin and Leu-Trp-Met-|-Arg-Phe-Ala.. Mediates digestion of the cell walls of the 2 mating type gametes during mating as a necessary prelude to cell fusion. This enzyme acts specifically on the framework proteins (inner wall) of the cell wall, cleaving several model peptides at specific sites. This is Autolysin from Chlamydomonas reinhardtii (Chlamydomonas smithii).